A 176-amino-acid chain; its full sequence is 2-C-methyl-D-erythritol 2,4-cyclodiphosphate synthase (176 aa).

Residues aspartate 23, histidine 25, and histidine 60 each contribute to the a divalent metal cation site. Position 23–25 (23–25) interacts with 4-CDP-2-C-methyl-D-erythritol 2-phosphate; that stretch reads DSH. 149–152 is a 4-CDP-2-C-methyl-D-erythritol 2-phosphate binding site; that stretch reads TSGE.

The protein belongs to the IspF family. As to quaternary structure, homotrimer. It depends on a divalent metal cation as a cofactor.

It carries out the reaction 4-CDP-2-C-methyl-D-erythritol 2-phosphate = 2-C-methyl-D-erythritol 2,4-cyclic diphosphate + CMP. It functions in the pathway isoprenoid biosynthesis; isopentenyl diphosphate biosynthesis via DXP pathway; isopentenyl diphosphate from 1-deoxy-D-xylulose 5-phosphate: step 4/6. Involved in the biosynthesis of isopentenyl diphosphate (IPP) and dimethylallyl diphosphate (DMAPP), two major building blocks of isoprenoid compounds. Catalyzes the conversion of 4-diphosphocytidyl-2-C-methyl-D-erythritol 2-phosphate (CDP-ME2P) to 2-C-methyl-D-erythritol 2,4-cyclodiphosphate (ME-CPP) with a corresponding release of cytidine 5-monophosphate (CMP). This chain is 2-C-methyl-D-erythritol 2,4-cyclodiphosphate synthase, found in Chlamydia felis (strain Fe/C-56) (Chlamydophila felis).